The primary structure comprises 503 residues: Inosine-5'-monophosphate dehydrogenase (503 aa).

K(+) is bound by residues Gly-20 and Ser-22. 2 consecutive CBS domains span residues 103 to 163 and 167 to 228; these read FVVS…ETKV and MTPF…LVDS. 261–263 contributes to the NAD(+) binding site; it reads DSS. The K(+) site is built by Asp-264, Phe-266, Gly-314, and Gly-316. 312–314 is an NAD(+) binding site; it reads GIG. Residue Ser-317 participates in IMP binding. Cys-319 is a K(+) binding site. Cys-319 acts as the Thioimidate intermediate in catalysis. IMP-binding positions include 358–360, 381–382, and 405–409; these read DGG, GR, and YWGEG. Catalysis depends on Arg-418, which acts as the Proton acceptor. Residue Glu-431 coordinates IMP. Residues Asn-460, Glu-485, Gly-486, and Gly-487 each coordinate K(+).

Belongs to the IMPDH/GMPR family. As to quaternary structure, homotetramer. Requires K(+) as cofactor.

The protein resides in the cytoplasm. The catalysed reaction is IMP + NAD(+) + H2O = XMP + NADH + H(+). It functions in the pathway purine metabolism; XMP biosynthesis via de novo pathway; XMP from IMP: step 1/1. With respect to regulation, mycophenolic acid (MPA) is a non-competitive inhibitor that prevents formation of the closed enzyme conformation by binding to the same site as the amobile flap. In contrast, mizoribine monophosphate (MZP) is a competitive inhibitor that induces the closed conformation. MPA is a potent inhibitor of mammalian IMPDHs but a poor inhibitor of the bacterial enzymes. MZP is a more potent inhibitor of bacterial IMPDH. Catalyzes the conversion of inosine 5'-phosphate (IMP) to xanthosine 5'-phosphate (XMP), the first committed and rate-limiting step in the de novo synthesis of guanine nucleotides, and therefore plays an important role in the regulation of cell growth. Could also have a single-stranded nucleic acid-binding activity and could play a role in RNA and/or DNA metabolism. The chain is Inosine-5'-monophosphate dehydrogenase from Tritrichomonas foetus (Trichomonas foetus).